A 274-amino-acid chain; its full sequence is Proteasome subunit beta (274 aa).

Residues 1 to 52 (MPDPTGVAGRLPAVFMTPGTSSFTDFLSVAAPDLLPGARGPLPAPVTDAAHG) constitute a propeptide, removed in mature form; by autocatalysis. Thr-53 functions as the Nucleophile in the catalytic mechanism.

This sequence belongs to the peptidase T1B family. As to quaternary structure, the 20S proteasome core is composed of 14 alpha and 14 beta subunits that assemble into four stacked heptameric rings, resulting in a barrel-shaped structure. The two inner rings, each composed of seven catalytic beta subunits, are sandwiched by two outer rings, each composed of seven alpha subunits. The catalytic chamber with the active sites is on the inside of the barrel. Has a gated structure, the ends of the cylinder being occluded by the N-termini of the alpha-subunits. Is capped by the proteasome-associated ATPase, ARC.

Its subcellular location is the cytoplasm. The catalysed reaction is Cleavage of peptide bonds with very broad specificity.. Its pathway is protein degradation; proteasomal Pup-dependent pathway. The formation of the proteasomal ATPase ARC-20S proteasome complex, likely via the docking of the C-termini of ARC into the intersubunit pockets in the alpha-rings, may trigger opening of the gate for substrate entry. Interconversion between the open-gate and close-gate conformations leads to a dynamic regulation of the 20S proteasome proteolysis activity. Component of the proteasome core, a large protease complex with broad specificity involved in protein degradation. The protein is Proteasome subunit beta of Parafrankia sp. (strain EAN1pec).